An 86-amino-acid polypeptide reads, in one-letter code: Large ribosomal subunit protein uL10 (86 aa).

The protein belongs to the universal ribosomal protein uL10 family. As to quaternary structure, part of the ribosomal stalk of the 50S ribosomal subunit. The N-terminus interacts with L11 and the large rRNA to form the base of the stalk. The C-terminus forms an elongated spine to which L12 dimers bind in a sequential fashion forming a multimeric L10(L12)X complex.

Forms part of the ribosomal stalk, playing a central role in the interaction of the ribosome with GTP-bound translation factors. The protein is Large ribosomal subunit protein uL10 (rplJ) of Serratia marcescens.